Consider the following 132-residue polypeptide: MSVSDPLGDMLTRIRNAVGRKKTKVSTPASKLRARVLDVLQAEGYIRGYTQSEFENGKAEIEIELKYYEGVPVIREITRVSKPGRRVYVSVKSIPQVVNGLGISILSTPKGVMADHEAREQNVGGELLCRIF.

This sequence belongs to the universal ribosomal protein uS8 family. Part of the 30S ribosomal subunit. Contacts proteins S5 and S12.

In terms of biological role, one of the primary rRNA binding proteins, it binds directly to 16S rRNA central domain where it helps coordinate assembly of the platform of the 30S subunit. The polypeptide is Small ribosomal subunit protein uS8 (Brucella melitensis biotype 1 (strain ATCC 23456 / CCUG 17765 / NCTC 10094 / 16M)).